The chain runs to 79 residues: Probable [Fe-S]-dependent transcriptional repressor (79 aa).

C56, C61, C64, and C70 together coordinate iron-sulfur cluster.

This sequence belongs to the FeoC family.

Its function is as follows. May function as a transcriptional regulator that controls feoABC expression. In Serratia proteamaculans (strain 568), this protein is Probable [Fe-S]-dependent transcriptional repressor.